The following is a 155-amino-acid chain: Peptide deformylase 2 (155 aa).

Positions 90 and 132 each coordinate Fe cation. Glu133 is a catalytic residue. Residue His136 participates in Fe cation binding.

The protein belongs to the polypeptide deformylase family. Fe(2+) serves as cofactor.

The enzyme catalyses N-terminal N-formyl-L-methionyl-[peptide] + H2O = N-terminal L-methionyl-[peptide] + formate. Its function is as follows. Removes the formyl group from the N-terminal Met of newly synthesized proteins. Requires at least a dipeptide for an efficient rate of reaction. N-terminal L-methionine is a prerequisite for activity but the enzyme has broad specificity at other positions. This is Peptide deformylase 2 from Clostridium perfringens (strain 13 / Type A).